We begin with the raw amino-acid sequence, 556 residues long: Interleukin-1 receptor-like 1 (556 aa).

A signal peptide spans 1–18; it reads MGFWILAILTILMYSTAA. Ig-like C2-type domains lie at 19–103 and 114–197; these read KFSK…ANVT and PDYL…VTAT. Topologically, residues 19–328 are extracellular; sequence KFSKQSWGLE…SRKNPIDHHS (310 aa). C36 and C87 are oxidised to a cystine. 5 N-linked (GlcNAc...) asparagine glycosylation sites follow: N54, N95, N101, N140, and N191. Cystine bridges form between C111–C151 and C133–C181. The tract at residues 198 to 211 is flexible linker; it reads RSFTVKDEQGFSLF. The region spanning 212–319 is the Ig-like C2-type 3 domain; it reads PVIGAPAQNE…GLRRHTVRLS (108 aa). Residues N232, N254, and N273 are each glycosylated (N-linked (GlcNAc...) asparagine). Disulfide bonds link C235–C303 and C238–C282. K321 is covalently cross-linked (Glycyl lysine isopeptide (Lys-Gly) (interchain with G-Cter in ubiquitin)). The helical transmembrane segment at 329–349 threads the bilayer; that stretch reads IYCIIAVCSVFLMLINVLVII. Residues 350–556 are Cytoplasmic-facing; it reads LKMFWIEATL…SLTPLAAQKQ (207 aa). One can recognise a TIR domain in the interval 375 to 535; sequence KLYDAYVVYP…KFWKHVRYQM (161 aa). Residue E461 is part of the active site.

Belongs to the interleukin-1 receptor family. Interacts with MYD88, IRAK1, IRAK4, and TRAF6. Bound to its ligand IL-33, interacts with IL1RAP to form the minimal interleukin-33 signaling complex with a 1:1:1 stoichiometry. Interacts with KIT (bound to KITLG/SCF). A mast cell-specific KITLG/SCF-induced interleukin-33 signaling complex contains IL1RL1, IL1RAP, KIT and MYD88. Interacts with TMED1. Post-translationally, ubiquitinated at Lys-321 in a FBXL19-mediated manner; leading to proteasomal degradation. Ubiquitination by TRAF6 via 'Lys-27'-linked polyubiquitination and deubiquitination by USP38 serves as a critical regulatory mechanism for fine-tuning IL1RL1-mediated inflammatory response. As to expression, highly expressed in kidney, lung, placenta, stomach, skeletal muscle, colon and small intestine. Isoform A is prevalently expressed in the lung, testis, placenta, stomach and colon. Isoform B is more abundant in the brain, kidney and the liver. Isoform C is not detected in brain, heart, liver, kidney and skeletal muscle. Expressed on T-cells in fibrotic liver; at protein level. Overexpressed in fibrotic and cirrhotic liver.

Its subcellular location is the cell membrane. It is found in the secreted. It catalyses the reaction NAD(+) + H2O = ADP-D-ribose + nicotinamide + H(+). Receptor for interleukin-33 (IL-33) which plays crucial roles in innate and adaptive immunity, contributing to tissue homeostasis and responses to environmental stresses together with coreceptor IL1RAP. Its stimulation recruits MYD88, IRAK1, IRAK4, and TRAF6, followed by phosphorylation of MAPK3/ERK1 and/or MAPK1/ERK2, MAPK14, and MAPK8. Possibly involved in helper T-cell function. Upon tissue injury, induces UCP2-dependent mitochondrial rewiring that attenuates the generation of reactive oxygen species and preserves the integrity of Krebs cycle required for persistent production of itaconate and subsequent GATA3-dependent differentiation of inflammation-resolving alternatively activated macrophages. In terms of biological role, inhibits IL-33 signaling. This Homo sapiens (Human) protein is Interleukin-1 receptor-like 1 (IL1RL1).